The sequence spans 121 residues: Protein YxiB (121 aa).

The protein is Protein YxiB (yxiB) of Bacillus subtilis (strain 168).